The primary structure comprises 288 residues: ATP synthase gamma chain (288 aa).

The protein belongs to the ATPase gamma chain family. F-type ATPases have 2 components, CF(1) - the catalytic core - and CF(0) - the membrane proton channel. CF(1) has five subunits: alpha(3), beta(3), gamma(1), delta(1), epsilon(1). CF(0) has three main subunits: a, b and c.

The protein resides in the cell inner membrane. Its function is as follows. Produces ATP from ADP in the presence of a proton gradient across the membrane. The gamma chain is believed to be important in regulating ATPase activity and the flow of protons through the CF(0) complex. The protein is ATP synthase gamma chain of Rickettsia prowazekii (strain Madrid E).